Consider the following 899-residue polypeptide: Gamma-aminobutyric acid type B receptor subunit 1 (899 aa).

The first 19 residues, 1-19, serve as a signal peptide directing secretion; the sequence is MFVRSSWLLLWGTIVWASA. Topologically, residues 20–447 are extracellular; it reads EPVTLHIGGT…KKHAMTVSNE (428 aa). N-linked (GlcNAc...) asparagine glycosylation is found at asparagine 69, asparagine 266, asparagine 339, asparagine 353, and asparagine 371. A helical membrane pass occupies residues 448 to 468; it reads FYYPTILFAVLGIAACVFIYL. Residues 469–487 are Cytoplasmic-facing; sequence FTQKHHERLIIFQSQPECN. The helical transmembrane segment at 488-508 threads the bilayer; that stretch reads NILLIGCSLCLFSLFLIGLPS. The Extracellular portion of the chain corresponds to 509–525; sequence DDISISESLFPLLCHAR. The chain crosses the membrane as a helical span at residues 526 to 546; it reads VTILLFGFTFAYGSMFAKVWI. Over 547–616 the chain is Cytoplasmic; sequence VHRMGATENQ…LNQPISSSKF (70 aa). A helical membrane pass occupies residues 617 to 637; the sequence is YVIVAALTAVDVFVCFVWVLI. Over 638–674 the chain is Extracellular; that stretch reads DPLHLTEQKFPLFTPADSEEDEMIMPVLQQCQSNQQE. The chain crosses the membrane as a helical span at residues 675–695; sequence VWIGIIMGFKCLLLVFGTFLS. Residues 696–713 are Cytoplasmic-facing; it reads YETRNLKLRFINDSRFVG. The chain crosses the membrane as a helical span at residues 714–734; it reads LAIYNVAVMTLVTAPVVTLLI. The Extracellular segment spans residues 735–741; that stretch reads HGKVDAN. The chain crosses the membrane as a helical span at residues 742-762; sequence FAFISLTVLICTYISVGLIYG. Over 763–899 the chain is Cytoplasmic; that stretch reads PKIRHIIKVP…SSTSSDEILL (137 aa). A coiled-coil region spans residues 791 to 842; sequence KVDQKRYDMLKKENETLQIQIEEKERKIHECKERLEELTKNSETEDMNAQLL. The tract at residues 870-899 is disordered; that stretch reads DLQNGNHPGQIYENDNDDDGSSTSSDEILL. Positions 890-899 are enriched in low complexity; it reads SSTSSDEILL.

It belongs to the G-protein coupled receptor 3 family. May form a heterodimer with gbb-2. Expressed in the nervous system, including cholinergic motor neurons, but not in GABAergic motor neurons or muscle.

The protein resides in the cell membrane. In terms of biological role, component of a heterodimeric G-protein coupled receptor for GABA, formed by gbb-1 and gbb-2. Within the heterodimeric GABA receptor, only gbb-1 seems to bind agonists, while gbb-2 mediates coupling to G proteins. Ligand binding causes a conformation change that triggers signaling via guanine nucleotide-binding proteins (G proteins) and modulates the activity of down-stream effectors, such as adenylate cyclase. Signaling inhibits adenylate cyclase, stimulates phospholipase A2, activates potassium channels, inactivates voltage-dependent calcium-channels and modulates inositol phospholipid hydrolysis. Calcium is required for high affinity binding to GABA. Plays a critical role in the fine-tuning of inhibitory synaptic transmission. Pre-synaptic GABA receptor inhibits neurotransmitter release by down-regulating high-voltage activated calcium channels, whereas postsynaptic GABA receptor decreases neuronal excitability by activating a prominent inwardly rectifying potassium (Kir) conductance that underlies the late inhibitory postsynaptic potentials. Along with gbb-2, may couple to the G(o)-alpha G-protein goa-1 to negatively regulate cholinergic receptor activity in the presence of high levels of acetylcholine in ventral cord motor neurons. As acetylcholine depolarizes body wall muscles, modulation of acetylcholine levels most likely results in the control of locomotory behavior. Acts in neurons to regulate lifespan, and this may be through G-protein-egl-8/PLC-beta signaling to the transcription factor daf-16/FOXO. The protein is Gamma-aminobutyric acid type B receptor subunit 1 of Caenorhabditis elegans.